The chain runs to 78 residues: MEIKVKTLTEKQIDIEIELTDTIERIKERIEEKEGIPPVHQRIVYTGKQLADDLTAKHYNLERGSVLHLVLALRGGCC.

Residue G76 forms a Glycyl lysine isopeptide (Gly-Lys) (interchain with K-? in acceptor proteins) linkage. The propeptide occupies C77–C78.

In terms of tissue distribution, detected in stems and flower buds, but not in leaves, mature flowers and seedlings.

In terms of biological role, may function as a stable post-translational protein modifier. In Arabidopsis thaliana (Mouse-ear cress), this protein is NEDD8-like protein RUB3 (RUB3).